The sequence spans 225 residues: ATP-dependent dethiobiotin synthetase BioD (225 aa).

12–17 (EVGKTY) contacts ATP. Thr-16 is a binding site for Mg(2+). Lys-37 is a catalytic residue. Ser-41 serves as a coordination point for substrate. Residues Asp-52, 114 to 117 (EGAG), and 174 to 175 (NC) contribute to the ATP site. Residues Asp-52 and Glu-114 each contribute to the Mg(2+) site.

This sequence belongs to the dethiobiotin synthetase family. Homodimer. Mg(2+) is required as a cofactor.

Its subcellular location is the cytoplasm. The enzyme catalyses (7R,8S)-7,8-diammoniononanoate + CO2 + ATP = (4R,5S)-dethiobiotin + ADP + phosphate + 3 H(+). Its pathway is cofactor biosynthesis; biotin biosynthesis; biotin from 7,8-diaminononanoate: step 1/2. Catalyzes a mechanistically unusual reaction, the ATP-dependent insertion of CO2 between the N7 and N8 nitrogen atoms of 7,8-diaminopelargonic acid (DAPA, also called 7,8-diammoniononanoate) to form a ureido ring. In Francisella tularensis subsp. novicida (strain U112), this protein is ATP-dependent dethiobiotin synthetase BioD.